Reading from the N-terminus, the 246-residue chain is MNIDTVRANAFAMPLTSPAFPMGPYRFVKREFFVITYRTDPEALRSVVPEPLAVTQPLVHYEFIRMPDSTGFGDYTESGQVIPVEYEGVAGSYTHAMYLNDHPPIAGGRELWGFPKKLALPTLKVHTDTLVGTLDYGPIRVATGTMGYKHEEVDIVEQARHLSAPNFLLKIIPHVDCSPRICELVRYYLEDIRVYGAWSGPAALELAPHALAPVADLPVLEVVGARHFIADLTLGLGEVVYDYLAK.

The active-site Schiff-base intermediate with acetoacetate is the lysine 116.

Belongs to the ADC family.

It carries out the reaction acetoacetate + H(+) = acetone + CO2. In terms of biological role, catalyzes the conversion of acetoacetate to acetone and carbon dioxide. The protein is Acetoacetate decarboxylase of Bordetella avium (strain 197N).